The primary structure comprises 266 residues: MGLCSDPAITYLKRLGYNVVRLPREGIQPLHLLGQQRGTVEYLGSLEKLITQPPSEPPAITRDQAAAGINGQKTENLSFSIGINILKSVLAQFGAGAGIEAQYNQARKVRFEFSNVLADSVEPLAVGQFLKMAEVDADNPVLKQYVLGNGRLYVITQVIKSNEFTVAAEKSGGGSIQLDVPEIQKVVGGKLKVEASVSSQSTVTYKGEKQLVFGFKCFEIGVKNGEITLFASQPGAIAMALDAAGGVMPSDSALLDEGGLLDLEGF.

Cys-4 is lipidated: S-palmitoyl cysteine. 4 beta stranded membrane-spanning segments follow: residues 69-85 (INGQ…GINI), 97-114 (AGIE…FEFS), 163-180 (EFTV…QLDV), and 189-205 (GKLK…TVTY). A C-terminal region region spans residues 238–266 (AMALDAAGGVMPSDSALLDEGGLLDLEGF).

The protein belongs to the bacterial gasdermin family. In terms of assembly, monomer in solution. As to quaternary structure, homooligomer; forms homooligomeric ring-shaped pores when inserted in membranes with 48-54 subunits per ring. In terms of processing, palmitoylation helps stabilize the inactive state; may self palmitoylate. Palmitoylation plays a significant role in pore formation.

It localises to the cytoplasm. The protein resides in the cell inner membrane. Its activity is regulated as follows. The full-length protein before cleavage is inactive: intramolecular interactions between the N-terminal domain and the C-terminal region as well as the lipid modification, mediate autoinhibition. The pyroptosis-like-inducing activity is carried by the released N-terminal domain (Gasdermin bGSDM, N-terminus). Its function is as follows. Precursor of a pore-forming protein involved in defense against bacteriophages. Expression of bGSDM and the neighboring protease gene (Ga0334635_1659) is toxic in E.coli. Cleavage of this precursor by its dedicated protease releases the active moiety (gasdermin bGSDM, N-terminus) which inserts into membranes, forming pores and triggering cell death. In terms of biological role, pore-forming protein that causes membrane permeabilization, probably via a pyroptosis-like activity. Makes ring-like pores with an interior pore diameter of 200-300 Angstroms, when integrated in liposomes. The chain is Gasdermin bGSDM from Vitiosangium sp. (strain GDMCC 1.1324).